The chain runs to 216 residues: Large ribosomal subunit protein bL25 (216 aa).

Residues 191–216 form a disordered region; the sequence is LVSAESEEDEDAPAADEVPATEVSEE. The span at 195-204 shows a compositional bias: acidic residues; sequence ESEEDEDAPA.

This sequence belongs to the bacterial ribosomal protein bL25 family. CTC subfamily. In terms of assembly, part of the 50S ribosomal subunit; part of the 5S rRNA/L5/L18/L25 subcomplex. Contacts the 5S rRNA. Binds to the 5S rRNA independently of L5 and L18.

In terms of biological role, this is one of the proteins that binds to the 5S RNA in the ribosome where it forms part of the central protuberance. The protein is Large ribosomal subunit protein bL25 of Jannaschia sp. (strain CCS1).